We begin with the raw amino-acid sequence, 114 residues long: Propane 2-monooxygenase, effector component (114 aa).

It belongs to the TmoD/XamoD family. The propane 2-monooxygenase multicomponent enzyme system is composed of an electron transfer component and a monooxygenase component interacting with the effector protein MimD. The electron transfer component is composed of a reductase (MimB), and the monooxygenase component is formed by a large subunit (MimA) and a small subunit (MimC).

Effector component of the propane 2-monooxygenase multicomponent enzyme system which is involved in the degradation of propane via the O2-dependent hydroxylation of propane. The protein is Propane 2-monooxygenase, effector component of Mycolicibacterium smegmatis (strain ATCC 700084 / mc(2)155) (Mycobacterium smegmatis).